We begin with the raw amino-acid sequence, 328 residues long: uncharacterized protein (328 aa).

Positions 72–91 form a DNA-binding region, H-T-H motif; it reads ALQIRDKFNLQRVIIVPDGE.

This sequence belongs to the SorC transcriptional regulatory family.

This is an uncharacterized protein from Escherichia coli (strain K12).